The chain runs to 666 residues: UvrABC system protein B (666 aa).

Positions 28–171 (NNINQGIQRQ…YLHVGELIEF (144 aa)) constitute a Helicase ATP-binding domain. ATP is bound at residue 41–48 (GATGTGKT). Residues 94–117 (YFDYYQPEAYKPITDTYIEKDSVT) carry the Beta-hairpin motif. Residues 436-598 (QIDDLINELM…IIPKTIIKPI (163 aa)) form the Helicase C-terminal domain. One can recognise a UVR domain in the interval 624–659 (NQKIKELKKKMEEAAKKREYEVAAQYRDMIVELEAI).

Belongs to the UvrB family. Forms a heterotetramer with UvrA during the search for lesions. Interacts with UvrC in an incision complex.

It is found in the cytoplasm. Its function is as follows. The UvrABC repair system catalyzes the recognition and processing of DNA lesions. A damage recognition complex composed of 2 UvrA and 2 UvrB subunits scans DNA for abnormalities. Upon binding of the UvrA(2)B(2) complex to a putative damaged site, the DNA wraps around one UvrB monomer. DNA wrap is dependent on ATP binding by UvrB and probably causes local melting of the DNA helix, facilitating insertion of UvrB beta-hairpin between the DNA strands. Then UvrB probes one DNA strand for the presence of a lesion. If a lesion is found the UvrA subunits dissociate and the UvrB-DNA preincision complex is formed. This complex is subsequently bound by UvrC and the second UvrB is released. If no lesion is found, the DNA wraps around the other UvrB subunit that will check the other stand for damage. The polypeptide is UvrABC system protein B (Ureaplasma parvum serovar 3 (strain ATCC 27815 / 27 / NCTC 11736)).